The chain runs to 540 residues: CUB domain-containing protein 2 (540 aa).

Residues 1–24 (MLAELGACLLLAMVLLDSDPGTQA) form the signal peptide. Topologically, residues 25 to 516 (MEGVKCGGVL…GTMVTQDTSD (492 aa)) are extracellular. 6 disulfide bridges follow: C30-C56, C83-C106, C145-C171, C198-C218, C257-C283, and C314-C336. CUB domains are found at residues 30-143 (CGGV…YQKD), 145-255 (CGGV…YFSG), and 257-373 (CQEV…YIGV). N-linked (GlcNAc...) asparagine glycosylation is present at N40. An N-linked (GlcNAc...) asparagine glycan is attached at N267. N-linked (GlcNAc...) asparagine glycosylation is found at N377, N435, and N436. The helical transmembrane segment at 517–537 (IVFLGLCILAGVLMIIAIVVL) threads the bilayer. The Cytoplasmic segment spans residues 538–540 (MLL).

The protein resides in the membrane. The chain is CUB domain-containing protein 2 (Cdcp2) from Mus musculus (Mouse).